A 372-amino-acid chain; its full sequence is Serine/threonine-protein kinase 17B (372 aa).

The Protein kinase domain occupies 33–293; the sequence is TLTPKELGRG…AESCLSHSWL (261 aa). ATP is bound by residues 39-47 and lysine 62; that span reads LGRGKFAVV. Aspartate 158 serves as the catalytic Proton acceptor. A disordered region spans residues 305–348; it reads EETSGSSQIQDLTLRSSEEKTSKSSCNGSCGAREDKENIPEDGS. Residues 307–319 are compositionally biased toward polar residues; it reads TSGSSQIQDLTLR.

This sequence belongs to the protein kinase superfamily. CAMK Ser/Thr protein kinase family. DAP kinase subfamily. Interacts with CHP1; the interaction induces CHP1 to translocate from the Golgi to the nucleus. Autophosphorylated.

Its subcellular location is the nucleus. The protein localises to the cell membrane. It is found in the endoplasmic reticulum-Golgi intermediate compartment. The enzyme catalyses L-seryl-[protein] + ATP = O-phospho-L-seryl-[protein] + ADP + H(+). It carries out the reaction L-threonyl-[protein] + ATP = O-phospho-L-threonyl-[protein] + ADP + H(+). Its function is as follows. Acts as a positive regulator of apoptosis. Phosphorylates myosin light chains. In Mus musculus (Mouse), this protein is Serine/threonine-protein kinase 17B (Stk17b).